A 146-amino-acid polypeptide reads, in one-letter code: Hemoglobin subunit beta (146 aa).

N-acetylvaline is present on valine 1. The Globin domain maps to 2–146 (HLTGEEKSAV…VATALAHKYH (145 aa)). Residue threonine 12 is modified to Phosphothreonine. Serine 44 carries the phosphoserine modification. Histidine 63 contacts heme b. N6-acetyllysine is present on lysine 82. Residue histidine 92 coordinates heme b. Residue cysteine 93 is modified to S-nitrosocysteine. At lysine 144 the chain carries N6-acetyllysine.

It belongs to the globin family. In terms of assembly, heterotetramer of two alpha chains and two beta chains. Red blood cells.

Involved in oxygen transport from the lung to the various peripheral tissues. This chain is Hemoglobin subunit beta (HBB), found in Tursiops truncatus (Atlantic bottle-nosed dolphin).